The primary structure comprises 592 residues: Thiol:disulfide interchange protein DsbD (592 aa).

The N-terminal stretch at 1 to 19 (MKLIASFSIFMLMSIWSFA) is a signal peptide. Cystine bridges form between Cys130–Cys136 and Cys204–Cys326. 8 helical membrane-spanning segments follow: residues 186-206 (IWVL…PCVF), 229-249 (FVLS…LGLV), 265-285 (IILG…FGAW), 318-338 (ISGL…LLYI), 345-365 (LLGF…LILF), 379-399 (WMNI…LMFV), 406-426 (MATD…FYVM), and 440-460 (ALVI…TIFG). Positions 443–592 (IFIGLFASAM…AFAAHAKNIL (150 aa)) constitute a Thioredoxin domain. The cysteines at positions 508 and 511 are disulfide-linked.

This sequence belongs to the thioredoxin family. DsbD subfamily.

The protein localises to the cell inner membrane. The catalysed reaction is [protein]-dithiol + NAD(+) = [protein]-disulfide + NADH + H(+). It carries out the reaction [protein]-dithiol + NADP(+) = [protein]-disulfide + NADPH + H(+). In terms of biological role, required to facilitate the formation of correct disulfide bonds in some periplasmic proteins and for the assembly of the periplasmic c-type cytochromes. Acts by transferring electrons from cytoplasmic thioredoxin to the periplasm. This transfer involves a cascade of disulfide bond formation and reduction steps. This Pseudoalteromonas atlantica (strain T6c / ATCC BAA-1087) protein is Thiol:disulfide interchange protein DsbD.